The sequence spans 323 residues: Calcium homeostasis modulator protein 2 (323 aa).

The Cytoplasmic portion of the chain corresponds to 1-21; that stretch reads MAALIAENFRFLSLFFKSKDV. The segment at 14 to 39 is central pore; the sequence is LFFKSKDVMIFNGLVALGTVGSQELF. The chain crosses the membrane as a helical span at residues 22–43; it reads MIFNGLVALGTVGSQELFSVVA. At 44–52 the chain is on the extracellular side; the sequence is FHCPCSPAR. Cystine bridges form between Cys46–Cys130 and Cys48–Cys162. A helical transmembrane segment spans residues 53–76; that stretch reads NYLYGLTAIGVPALALFLIGVILN. Over 77–101 the chain is Cytoplasmic; that stretch reads NHTWNLVAECQYRRAKNCSAAPNFL. The chain crosses the membrane as a helical span at residues 102–132; it reads LLSSILGRAAVAPVTWSVISLLRGEAYVCAL. Residues 133-179 lie on the Extracellular side of the membrane; the sequence is SEFVDPSSLTAGDKGFPPAHATEVLARFPCGEGPANLSSFREEVSRR. Residues 145 to 152 are hemichannel docking; sequence DKGFPPAH. Residues 180–206 form a helical membrane-spanning segment; that stretch reads LKYESQLFGWLLIGVVAILVFLTKCLK. At 207–323 the chain is on the cytoplasmic side; the sequence is HYCSPLSYRQ…DNVEMALLTA (117 aa). Positions 214–251 are intersubunit interaction; the sequence is YRQEAYWAQYRTNEDQLFQRTAEVHSRVLAANNVRRFF.

Belongs to the CALHM family. Homo-undecamer. Two undecameric hemichannels can assemble in a head-to-head manner to form a gap junction. In terms of tissue distribution, neuron, astrocyte, and microglia.

Its subcellular location is the cell membrane. It carries out the reaction ATP(in) = ATP(out). With respect to regulation, inhibited by divalent cations such as Co(2+) and Ni(2+). Pore-forming subunit of Ca(2+) homeostasis modulator channels. Mediates ATP release from astrocytes and ATP-induced Ca(2+) influx in microglia thus regulating neuronal ATP and Ca(2+) homeostasis, synaptic transmission and neuroinflammatory response. May form intercellular gap junctions. The gating mechanism remains unknown. The chain is Calcium homeostasis modulator protein 2 from Mus musculus (Mouse).